An 811-amino-acid chain; its full sequence is Myb-like DNA-binding protein BAS1 (811 aa).

The Myb-like domain maps to 34–110 (HRKNGRNSWS…DVRKRWTGSL (77 aa)). HTH myb-type domains follow at residues 111-165 (DPNL…GPGS) and 166-218 (KGRL…TMVV). 2 consecutive DNA-binding regions (H-T-H motif) follow at residues 138-161 (WLSISMDIPGRTEDQCAKRYIEVL) and 191-214 (WRKISSEMEFRPSLTCRNRWRKII). Over residues 237-264 (DMTDGKLRQHPIADSDIRSDSTPNKEEQ) the composition is skewed to basic and acidic residues. Disordered stretches follow at residues 237–320 (DMTD…SAPP), 348–379 (SQMNKQSPGGISDSPQTSLPPAFNPASLDEHM), 535–713 (ATSH…LRDE), and 782–811 (LHNEAKKTSEHDMTSGGSTDNGSVLPLNPS). Residues 265–275 (LQLSQQNNPSL) show a composition bias toward low complexity. A compositionally biased stretch (basic and acidic residues) spans 282 to 298 (NVKENESSKLPRLKDND). 3 stretches are compositionally biased toward polar residues: residues 348-366 (SQMNKQSPGGISDSPQTSL), 535-613 (ATSH…TSGS), and 653-664 (LNPSPNSVRSNG). Residues 782–794 (LHNEAKKTSEHDM) are compositionally biased toward basic and acidic residues.

As to quaternary structure, monomer.

The protein localises to the nucleus. In terms of biological role, activates HIS4 transcription only in combination with PHO2/BAS2. BAS1 is also involved in the regulation of the purine biosynthesis pathway. This is Myb-like DNA-binding protein BAS1 (BAS1) from Saccharomyces cerevisiae (strain ATCC 204508 / S288c) (Baker's yeast).